The primary structure comprises 197 residues: Translation initiation factor IF-3 (197 aa).

It belongs to the IF-3 family. Monomer.

The protein localises to the cytoplasm. IF-3 binds to the 30S ribosomal subunit and shifts the equilibrium between 70S ribosomes and their 50S and 30S subunits in favor of the free subunits, thus enhancing the availability of 30S subunits on which protein synthesis initiation begins. This chain is Translation initiation factor IF-3, found in Prosthecochloris aestuarii (strain DSM 271 / SK 413).